A 602-amino-acid chain; its full sequence is Cholinesterase (602 aa).

Residues 1–28 (MQSKGTIISIQFLLRFLLLWVLIGKSHT) form the signal peptide. A glycan (N-linked (GlcNAc...) asparagine) is linked at N85. A disulfide bridge connects residues C93 and C120. Residue N134 is glycosylated (N-linked (GlcNAc...) asparagine). 144 to 145 (GG) is a binding site for substrate. The active-site Acyl-ester intermediate is the S226. S226 carries the post-translational modification Phosphoserine. N-linked (GlcNAc...) asparagine glycans are attached at residues N269 and N284. A disulfide bond links C280 and C291. The active-site Charge relay system is the E353. A glycan (N-linked (GlcNAc...) asparagine) is linked at N369. The cysteines at positions 428 and 547 are disulfide-linked. The Charge relay system role is filled by H466. Residues N483, N509, N513, and N514 are each glycosylated (N-linked (GlcNAc...) asparagine).

This sequence belongs to the type-B carboxylesterase/lipase family. Homotetramer; disulfide-linked. Dimer of dimers.

It localises to the secreted. The enzyme catalyses an acylcholine + H2O = a carboxylate + choline + H(+). Esterase with broad substrate specificity. Contributes to the inactivation of the neurotransmitter acetylcholine. Can degrade neurotoxic organophosphate esters. The chain is Cholinesterase (BCHE) from Felis catus (Cat).